Consider the following 394-residue polypeptide: Proliferation-associated protein 2G4 (394 aa).

An N-acetylserine modification is found at S2. At S2 the chain carries Phosphoserine. Residues 2–48 are necessary for nucleolar localization; it reads SGEDEQQEQTIAEDLVVTKYKMGGDIANRVLRSLVEASSSGVSVLSL. Positions 46–54 are RNA-binding; sequence LSLCEKGDA. A Glycyl lysine isopeptide (Lys-Gly) (interchain with G-Cter in SUMO2) cross-link involves residue K298. Positions 301–394 are necessary for nucleolar localization; that stretch reads LLQPFNVLYE…ETLEENGAGD (94 aa). At S335 the chain carries Phosphoserine. A disordered region spans residues 358–394; sequence LQSSASRKTQKKKKKKASKTVENATSGETLEENGAGD. Position 361 is a phosphoserine; by PKC/PRKCD (S361). Positions 361–375 are interaction with RNA; that stretch reads SASRKTQKKKKKKAS. The segment covering 365–375 has biased composition (basic residues); the sequence is KTQKKKKKKAS. A phosphothreonine mark is found at T366 and T386.

The protein belongs to the peptidase M24 family. As to quaternary structure, isoform 2 interacts with the cytoplasmic domain of non-phosphorylated ERBB3; the interaction requires PKC activity. Interacts with AR. Treatment with HRG leads to dissociation from ERBB3 and increases association with AR. Interacts with nucleolin/NCL. Component of a ribonucleoprotein complex containing at least PA2G4, NCL, TOP1, PABPC2, RPLP0, acetylated histone H1 (HIST1H1A or H1F1), histone H1 2/4, RPL4, RPL8, RPL15, RPL18, RPL18A, RPL21, RPL11, RPL12, RPL28, RPL27, RPLP2 and RPL24. Interacts with HDAC2. Interacts with RB1; the interaction is enhanced upon PA2G4 dephosphorylation. Interacts with AKT1. Isoform 1 and isoform 2 interact with RNF20. Isoform 2 interacts with HUWE1. Interacts with DNAJC21. Post-translationally, phosphorylated on serine and threonine residues. Phosphorylation is enhanced by HRG treatment. Basal phosphorylation is PKC-dependent and HRG-induced phosphorylation is predominantly PKC-independent. Phosphorylation at Ser-361 by PKC/PRKCD regulates its nucleolar localization. In terms of processing, isoform 2 is polyubiquitinated, leading to proteasomal degradation and phosphorylation by PKC/PRKCD enhances polyubiquitination. As to expression, widely expressed.

It localises to the cytoplasm. The protein resides in the nucleus. The protein localises to the nucleolus. Its function is as follows. May play a role in a ERBB3-regulated signal transduction pathway. Seems be involved in growth regulation. Acts a corepressor of the androgen receptor (AR) and is regulated by the ERBB3 ligand neuregulin-1/heregulin (HRG). Inhibits transcription of some E2F1-regulated promoters, probably by recruiting histone acetylase (HAT) activity. Binds RNA. Associates with 28S, 18S and 5.8S mature rRNAs, several rRNA precursors and probably U3 small nucleolar RNA. May be involved in regulation of intermediate and late steps of rRNA processing. May be involved in ribosome assembly. Mediates cap-independent translation of specific viral IRESs (internal ribosomal entry site). Together with PTBP1 is required for the translation initiation on the foot-and-mouth disease virus (FMDV) IRES. Regulates cell proliferation, differentiation, and survival. Isoform 1 suppresses apoptosis whereas isoform 2 promotes cell differentiation. The chain is Proliferation-associated protein 2G4 (Pa2g4) from Mus musculus (Mouse).